Consider the following 203-residue polypeptide: Protein P10 (203 aa).

2 disordered regions span residues 1 to 80 (MAGK…AAKK) and 166 to 203 (RDKKEAAKPMAQKVQEAKPTEHDPAAPYIEQLPVSNTL). A compositionally biased stretch (gly residues) spans 39–49 (GGSGSDAGSGD). Residues 180 to 189 (QEAKPTEHDP) show a composition bias toward basic and acidic residues.

Functionally, assembly protein. The major coat protein P3 and two assembly factors (P10 and P17) are needed during the assembly of the virus particle inside the host cell, when the capsid protein multimers are capable of enclosing the host-derived membrane, containing the virus-encoded membrane-associated proteins. The polypeptide is Protein P10 (X) (Acinetobacter calcoaceticus (Arthrobacter siderocapsulatus)).